Here is a 307-residue protein sequence, read N- to C-terminus: Small ribosomal subunit biogenesis GTPase RsgA (307 aa).

A disordered region spans residues M1 to M20. A compositionally biased stretch (polar residues) spans G10–M20. The CP-type G domain maps to R85–F242. GTP-binding positions include N135 to D138 and G184 to T192. 4 residues coordinate Zn(2+): C266, C271, H273, and C279.

It belongs to the TRAFAC class YlqF/YawG GTPase family. RsgA subfamily. As to quaternary structure, monomer. Associates with 30S ribosomal subunit, binds 16S rRNA. It depends on Zn(2+) as a cofactor.

It localises to the cytoplasm. One of several proteins that assist in the late maturation steps of the functional core of the 30S ribosomal subunit. Helps release RbfA from mature subunits. May play a role in the assembly of ribosomal proteins into the subunit. Circularly permuted GTPase that catalyzes slow GTP hydrolysis, GTPase activity is stimulated by the 30S ribosomal subunit. The sequence is that of Small ribosomal subunit biogenesis GTPase RsgA from Neisseria meningitidis serogroup C / serotype 2a (strain ATCC 700532 / DSM 15464 / FAM18).